Consider the following 698-residue polypeptide: SHC SH2 domain-binding protein 1 homolog B (698 aa).

PbH1 repeat units lie at residues 480–502 (CAEL…EIYP), 503–524 (GSKC…LIKD), and 532–554 (IPKI…VLVK).

The protein localises to the midbody. Its subcellular location is the cytoplasm. It is found in the cytoskeleton. The protein resides in the spindle. May play a role in signaling pathways governing cellular proliferation. The sequence is that of SHC SH2 domain-binding protein 1 homolog B (shcbp1-b) from Xenopus laevis (African clawed frog).